The primary structure comprises 257 residues: Staphylococcal secretory antigen SsaA (257 aa).

A signal peptide spans 1–26; the sequence is MKKIATATIATAGIATFAFAHHDAQA. 8 consecutive repeat copies span residues 73 to 75, 76 to 78, 84 to 86, 87 to 89, 90 to 92, 93 to 95, 96 to 98, and 99 to 101. Positions 73–101 are 8 X 3 AA repeats of Y-[NS]-N; sequence YNNYNNYNYYGYNNYSNYNNYSNYNNYNN. The tract at residues 101-144 is disordered; that stretch reads NYQSNNTQSQRTTQPTGGLGASYSTSSSNVHVTTTSAPSSNGVS. Residues 107–116 show a composition bias toward polar residues; it reads TQSQRTTQPT. Over residues 122-136 the composition is skewed to low complexity; the sequence is SYSTSSSNVHVTTTS. The region spanning 136 to 257 is the Peptidase C51 domain; it reads SAPSSNGVSL…SQAASYNYIH (122 aa).

It localises to the secreted. Its function is as follows. Not known; immunogenic protein expressed during sepsis and particularly during episodes of infective endocarditis. In Staphylococcus epidermidis, this protein is Staphylococcal secretory antigen SsaA (ssaA).